The primary structure comprises 783 residues: Galactinol--sucrose galactosyltransferase (783 aa).

The protein belongs to the glycosyl hydrolases 36 family.

It catalyses the reaction alpha-D-galactosyl-(1-&gt;3)-1D-myo-inositol + sucrose = raffinose + myo-inositol. With respect to regulation, inhibited by Ag(2)+, Hg(2+), Zn(2+), p-chloromercuribenzoate (pCMB) and 1-deoxygalactonojirimycin. Its function is as follows. Transglycosidase operating by a ping-pong reaction mechanism. Involved in the synthesis of raffinose, a major soluble carbohydrate in seeds, roots and tubers. Specific for galactinol and p-nitrophenyl-alpha-D-galactoside as galactosyl donors. Able to utilize sucrose, lactose, 4-beta-galactobiose, N-acetyl-D-lactosamine, trehalose and lacto-N-biose as acceptors. May also act as a glycoside hydrolase. This Oryza sativa subsp. japonica (Rice) protein is Galactinol--sucrose galactosyltransferase (RFS).